The following is a 155-amino-acid chain: Ribosome maturation factor RimP (155 aa).

Belongs to the RimP family.

It is found in the cytoplasm. Functionally, required for maturation of 30S ribosomal subunits. This is Ribosome maturation factor RimP from Dichelobacter nodosus (strain VCS1703A).